A 396-amino-acid polypeptide reads, in one-letter code: Ribosomal RNA small subunit methyltransferase H (396 aa).

Residues 101–103, Asp-120, Tyr-147, Asp-171, and Gln-178 contribute to the S-adenosyl-L-methionine site; that span reads GGH.

Belongs to the methyltransferase superfamily. RsmH family.

The protein localises to the cytoplasm. The catalysed reaction is cytidine(1402) in 16S rRNA + S-adenosyl-L-methionine = N(4)-methylcytidine(1402) in 16S rRNA + S-adenosyl-L-homocysteine + H(+). In terms of biological role, specifically methylates the N4 position of cytidine in position 1402 (C1402) of 16S rRNA. The polypeptide is Ribosomal RNA small subunit methyltransferase H (Mycobacterium bovis (strain ATCC BAA-935 / AF2122/97)).